The chain runs to 540 residues: Glucose-6-phosphate isomerase (540 aa).

The active-site Proton donor is Glu-350. Active-site residues include His-381 and Lys-503.

The protein belongs to the GPI family.

The protein localises to the cytoplasm. The catalysed reaction is alpha-D-glucose 6-phosphate = beta-D-fructose 6-phosphate. Its pathway is carbohydrate biosynthesis; gluconeogenesis. It participates in carbohydrate degradation; glycolysis; D-glyceraldehyde 3-phosphate and glycerone phosphate from D-glucose: step 2/4. In terms of biological role, catalyzes the reversible isomerization of glucose-6-phosphate to fructose-6-phosphate. This Paraburkholderia phytofirmans (strain DSM 17436 / LMG 22146 / PsJN) (Burkholderia phytofirmans) protein is Glucose-6-phosphate isomerase.